A 234-amino-acid polypeptide reads, in one-letter code: Viral Fc-gamma receptor-like protein IR11 (234 aa).

A signal peptide spans 1 to 23 (MQTYSTPLTLVIVTSLFLFTTQG). One can recognise an Ig-like V-type domain in the interval 24–122 (SSSNAVEPTK…VKDTGVYLLQ (99 aa)). The Extracellular segment spans residues 24 to 182 (SSSNAVEPTK…DLKRQWSGLS (159 aa)). N-linked (GlcNAc...) asparagine; by host glycans are attached at residues Asn57, Asn105, and Asn110. Residues 183–203 (LHCAWVSGMMIFVGALVICFL) traverse the membrane as a helical segment. Residues 204 to 234 (RSQRIGEQDAEHLRTDLDTEPLLLTVDGDLQ) are Cytoplasmic-facing.

This sequence belongs to the RL11 family.

It is found in the membrane. The protein is Viral Fc-gamma receptor-like protein IR11 of Homo sapiens (Human).